A 312-amino-acid polypeptide reads, in one-letter code: MPFAPSLLSSSSSVSQFLPRFPNATRFNVTPRSRAATVVAASVTDLAGVDSTTIAVLGGGSVAALAAMVSLTDPERRRKLQAEEVGGGDKEVVREYFNSTGFERWRKIYGETDEVNRVQKDIRLGHAKTVENTMLMLTEDRSLAGVTVCDAGCGTGLLSIPLAKEGAIVSASDISAAMVAEAEMKAKAQLPSENLPKFEVNDLESLTGKYDTVVCLDVLIHYPQNKADGMIAHLASLAEKRVILSFAPKTFYYDILKRIGELFPGPSKATRAYLHSEADVERALGKVGWKISKRGLTTTQFYFSRLIEAVPM.

The transit peptide at Met-1–Val-39 directs the protein to the chloroplast.

It belongs to the class I-like SAM-binding methyltransferase superfamily. Magnesium protoporphyrin O-methyltransferase family.

It is found in the plastid. Its subcellular location is the chloroplast membrane. The protein localises to the chloroplast thylakoid membrane. It carries out the reaction Mg-protoporphyrin IX + S-adenosyl-L-methionine = Mg-protoporphyrin IX 13-monomethyl ester + S-adenosyl-L-homocysteine. The protein operates within porphyrin-containing compound metabolism; chlorophyll biosynthesis. With respect to regulation, regulated by the folate status via an increased concentration of S-adenosyl-homocysteine (AdoHcy), a potent inhibitor of most AdoMet-dependent methyltransferases. Its function is as follows. Converts Mg-protoporphyrin IX to Mg-protoporphyrin IX methylester using S-adenosyl-L-methionine as a cofactor. Involved in chloroplast-to-nucleus signaling by acting as a negative effector of nuclear photosynthetic gene expression. This is Magnesium protoporphyrin IX methyltransferase, chloroplastic (CHLM) from Arabidopsis thaliana (Mouse-ear cress).